The chain runs to 550 residues: Chaperonin GroEL (550 aa).

Residues 30 to 33 (TLGP), Lys51, 87 to 91 (DGTTT), Gly415, 479 to 481 (NAA), and Asp495 each bind ATP.

It belongs to the chaperonin (HSP60) family. In terms of assembly, forms a cylinder of 14 subunits composed of two heptameric rings stacked back-to-back. Interacts with the co-chaperonin GroES.

It localises to the cytoplasm. The catalysed reaction is ATP + H2O + a folded polypeptide = ADP + phosphate + an unfolded polypeptide.. Its function is as follows. Together with its co-chaperonin GroES, plays an essential role in assisting protein folding. The GroEL-GroES system forms a nano-cage that allows encapsulation of the non-native substrate proteins and provides a physical environment optimized to promote and accelerate protein folding. This is Chaperonin GroEL from Polynucleobacter asymbioticus (strain DSM 18221 / CIP 109841 / QLW-P1DMWA-1) (Polynucleobacter necessarius subsp. asymbioticus).